The primary structure comprises 261 residues: Protein STAY-GREEN, chloroplastic (261 aa).

The N-terminal 54 residues, 1–54 (MDTLTSAPLLTTKFKPSFSPQQKPCFPHRRRFENGKKNQSIVPVARLFGPAIFE), are a transit peptide targeting the chloroplast.

The protein belongs to the staygreen family.

It localises to the plastid. Its subcellular location is the chloroplast. Functionally, probably involved in the disassembling mechanism of the intact light-harvesting complex of photosystem II (LHCII) in the thylakoid membranes. Required for the chlorophyll breakdown pathway. Acts independent and upstream of pheophorbide a oxygenase (PAO). This is Protein STAY-GREEN, chloroplastic (SGR) from Pisum sativum (Garden pea).